The sequence spans 468 residues: UDP-N-acetylmuramoyl-L-alanine--L-glutamate ligase (468 aa).

122–128 (GTKGKST) lines the ATP pocket.

The protein belongs to the MurCDEF family. MurD2 subfamily.

The protein localises to the cytoplasm. It catalyses the reaction UDP-N-acetyl-alpha-D-muramoyl-L-alanine + L-glutamate + ATP = UDP-N-acetyl-alpha-D-muramoyl-L-alanyl-L-glutamate + ADP + phosphate + H(+). Its pathway is cell wall biogenesis; peptidoglycan biosynthesis. In terms of biological role, cell wall formation. Catalyzes the addition of L-glutamate to the nucleotide precursor UDP-N-acetylmuramoyl-L-alanine. This chain is UDP-N-acetylmuramoyl-L-alanine--L-glutamate ligase, found in Xylella fastidiosa (strain 9a5c).